We begin with the raw amino-acid sequence, 213 residues long: GTP cyclohydrolase 1 (213 aa).

The tract at residues 1-27 (MDDVVKSLLQRTTSSLTKPAPARPSRE) is disordered. Residues Cys100, His103, and Cys172 each contribute to the Zn(2+) site.

This sequence belongs to the GTP cyclohydrolase I family. Homomer.

The enzyme catalyses GTP + H2O = 7,8-dihydroneopterin 3'-triphosphate + formate + H(+). The protein operates within cofactor biosynthesis; 7,8-dihydroneopterin triphosphate biosynthesis; 7,8-dihydroneopterin triphosphate from GTP: step 1/1. The polypeptide is GTP cyclohydrolase 1 (Beijerinckia indica subsp. indica (strain ATCC 9039 / DSM 1715 / NCIMB 8712)).